Reading from the N-terminus, the 901-residue chain is HTH-type transcriptional regulator MalT (901 aa).

39–46 (SPAGYGKT) lines the ATP pocket. The HTH luxR-type domain maps to 829–894 (ELIRTSPLTQ…AAVQHAQKLL (66 aa)). Residues 853–872 (NEQIAGELEVAATTIKTHIR) constitute a DNA-binding region (H-T-H motif).

This sequence belongs to the MalT family. Monomer in solution. Oligomerizes to an active state in the presence of the positive effectors ATP and maltotriose.

Its activity is regulated as follows. Activated by ATP and maltotriose, which are both required for DNA binding. Its function is as follows. Positively regulates the transcription of the maltose regulon whose gene products are responsible for uptake and catabolism of malto-oligosaccharides. Specifically binds to the promoter region of its target genes, recognizing a short DNA motif called the MalT box. The protein is HTH-type transcriptional regulator MalT of Escherichia coli O127:H6 (strain E2348/69 / EPEC).